A 444-amino-acid chain; its full sequence is MNFFTSAVGSKVFKRNNFKYVAIAASSIGLAAYHIRKDAIALDIPNSTYQHVSKNRVPPTDGDGITKRLKEFERTVTVNKDGIFRYDFNQVASNDPCEDDHVEVIDRNIDEGNWYFWGIFDGHSGWNTSLFLRQHLVPAVVRELQKCTASYYHQNACPSSLALDKSISEAFAKVDHQIVHEHVSHVFNNPESLQVAASLLLPALSGSCALLTSYSAKSKSLQVACTGDSRAVLGECTPDGSWEAIPLSRDQTGMNPDEASRLEVEHPGEEVLRNNRILGRLMPSRAFGDARYKWSQEISERLHREYFSASPIPVKTPPYVTAVPEIESITVNPKKHRFLIMASDGLWDTMSSEQAVQLVGEWADTVLGKTTNEKNTTQDDKQSWSLFKKTSKVIDDNAATHLIRHSLGGSDQRISALLTLTYPISRRYRDDITVTVIFFDEKTL.

The 355-residue stretch at 85–439 (RYDFNQVASN…DDITVTVIFF (355 aa)) folds into the PPM-type phosphatase domain. Asp121, Gly122, and Asp344 together coordinate Mn(2+).

It belongs to the PP2C family. Requires Mg(2+) as cofactor. It depends on Mn(2+) as a cofactor.

The protein resides in the mitochondrion. It carries out the reaction O-phospho-L-seryl-[protein] + H2O = L-seryl-[protein] + phosphate. It catalyses the reaction O-phospho-L-threonyl-[protein] + H2O = L-threonyl-[protein] + phosphate. Involved in regulation of pyruvate dehydrogenase activity. This is Protein phosphatase 2C homolog C10F6.17c from Schizosaccharomyces pombe (strain 972 / ATCC 24843) (Fission yeast).